The following is a 330-amino-acid chain: Probable deoxyhypusine synthase (330 aa).

Lys-303 functions as the Nucleophile in the catalytic mechanism.

The protein belongs to the deoxyhypusine synthase family. NAD(+) serves as cofactor.

It carries out the reaction [eIF5A protein]-L-lysine + spermidine = [eIF5A protein]-deoxyhypusine + propane-1,3-diamine. Its pathway is protein modification; eIF5A hypusination. Catalyzes the NAD-dependent oxidative cleavage of spermidine and the subsequent transfer of the butylamine moiety of spermidine to the epsilon-amino group of a specific lysine residue of the eIF-5A precursor protein to form the intermediate deoxyhypusine residue. The sequence is that of Probable deoxyhypusine synthase (dys) from Methanocaldococcus jannaschii (strain ATCC 43067 / DSM 2661 / JAL-1 / JCM 10045 / NBRC 100440) (Methanococcus jannaschii).